The following is a 614-amino-acid chain: Methionine--tRNA ligase (614 aa).

Residues 11 to 21 (PYTNGPRHIGH) carry the 'HIGH' region motif. Cysteine 143, cysteine 146, cysteine 156, and cysteine 159 together coordinate Zn(2+). Positions 359–363 (QFSTS) match the 'KMSKS' region motif. An ATP-binding site is contributed by threonine 362.

This sequence belongs to the class-I aminoacyl-tRNA synthetase family. MetG type 1 subfamily. As to quaternary structure, monomer. Requires Zn(2+) as cofactor.

It localises to the cytoplasm. The enzyme catalyses tRNA(Met) + L-methionine + ATP = L-methionyl-tRNA(Met) + AMP + diphosphate. Is required not only for elongation of protein synthesis but also for the initiation of all mRNA translation through initiator tRNA(fMet) aminoacylation. This is Methionine--tRNA ligase from Beutenbergia cavernae (strain ATCC BAA-8 / DSM 12333 / CCUG 43141 / JCM 11478 / NBRC 16432 / NCIMB 13614 / HKI 0122).